Reading from the N-terminus, the 757-residue chain is Elongation factor G, mitochondrial (757 aa).

The tr-type G domain occupies 66–344 (DRMRNIGISA…VLDYLPCPME (279 aa)). GTP contacts are provided by residues 75–82 (AHIDSGKT), 142–146 (DTPGH), and 196–199 (NKLD).

Belongs to the TRAFAC class translation factor GTPase superfamily. Classic translation factor GTPase family. EF-G/EF-2 subfamily.

Its subcellular location is the mitochondrion. Its pathway is protein biosynthesis; polypeptide chain elongation. Mitochondrial GTPase that catalyzes the GTP-dependent ribosomal translocation step during translation elongation. During this step, the ribosome changes from the pre-translocational (PRE) to the post-translocational (POST) state as the newly formed A-site-bound peptidyl-tRNA and P-site-bound deacylated tRNA move to the P and E sites, respectively. Catalyzes the coordinated movement of the two tRNA molecules, the mRNA and conformational changes in the ribosome. The sequence is that of Elongation factor G, mitochondrial from Oryza sativa subsp. japonica (Rice).